The sequence spans 1375 residues: DNA-directed RNA polymerase subunit beta (1375 aa).

This sequence belongs to the RNA polymerase beta chain family. As to quaternary structure, the RNAP catalytic core consists of 2 alpha, 1 beta, 1 beta' and 1 omega subunit. When a sigma factor is associated with the core the holoenzyme is formed, which can initiate transcription.

The catalysed reaction is RNA(n) + a ribonucleoside 5'-triphosphate = RNA(n+1) + diphosphate. In terms of biological role, DNA-dependent RNA polymerase catalyzes the transcription of DNA into RNA using the four ribonucleoside triphosphates as substrates. The polypeptide is DNA-directed RNA polymerase subunit beta (Methylibium petroleiphilum (strain ATCC BAA-1232 / LMG 22953 / PM1)).